Here is a 235-residue protein sequence, read N- to C-terminus: Probable 2-phosphosulfolactate phosphatase (235 aa).

Belongs to the ComB family. Mg(2+) serves as cofactor.

It carries out the reaction (2R)-O-phospho-3-sulfolactate + H2O = (2R)-3-sulfolactate + phosphate. The sequence is that of Probable 2-phosphosulfolactate phosphatase from Clostridium novyi (strain NT).